Consider the following 567-residue polypeptide: PHD finger protein 1 (567 aa).

The interval Met1–Leu31 is disordered. The 58-residue stretch at Pro29–Glu86 folds into the Tudor domain. PHD-type zinc fingers lie at residues Glu87–Ala142 and Gln186–Gly240. Disordered regions lie at residues Ala333–Arg441 and His455–Ser537. At Gly360 the chain carries Phosphoserine. Positions Pro371 to Glu386 are enriched in basic and acidic residues. Position 420 is a phosphoserine (Ser420). Composition is skewed to low complexity over residues Pro423 to Tyr433, Pro456 to Pro470, and Ser488 to Arg510. Residues Gly524–Gly534 show a composition bias toward gly residues.

It belongs to the Polycomblike family. In terms of assembly, interacts with CHMP1. Associated component of the PRC2 complex. Interacts with p53/TP53. In terms of tissue distribution, highest levels in heart, skeletal muscle, and pancreas, lower levels in brain, placenta, lung, liver and kidney.

The protein resides in the nucleus. It localises to the cytoplasm. Its subcellular location is the cytoskeleton. It is found in the microtubule organizing center. The protein localises to the centrosome. In terms of biological role, polycomb group (PcG) that specifically binds histone H3 trimethylated at 'Lys-36' (H3K36me3) and recruits the PRC2 complex. Involved in DNA damage response and is recruited at double-strand breaks (DSBs). Acts by binding to H3K36me3, a mark for transcriptional activation, and recruiting the PRC2 complex: it is however unclear whether recruitment of the PRC2 complex to H3K36me3 leads to enhance or inhibit H3K27me3 methylation mediated by the PRC2 complex. According to some reports, PRC2 recruitment by PHF1 promotes H3K27me3 and subsequent gene silencing by inducing spreading of PRC2 and H3K27me3 into H3K36me3 loci. According to another report, PHF1 recruits the PRC2 complex at double-strand breaks (DSBs) and inhibits the activity of PRC2. Regulates p53/TP53 stability and prolonges its turnover: may act by specifically binding to a methylated from of p53/TP53. This chain is PHD finger protein 1 (PHF1), found in Homo sapiens (Human).